The sequence spans 446 residues: Putative F-box protein At1g32660 (446 aa).

2 stretches are compositionally biased toward basic and acidic residues: residues 1-12 and 43-57; these read MKRKDDDQEDRS and NKLEEDEKEDTNPSK. The segment at 1–57 is disordered; that stretch reads MKRKDDDQEDRSCSSASKLDPIPLDLKMATVPTKSHMKKSHQNKLEEDEKEDTNPSK. Residues 57–107 form the F-box domain; that stretch reads KLELDSLPLDLKMAILTRIPAKSLMKLRCVSKMWSSIIRSRGFIDSYYAIS.

This Arabidopsis thaliana (Mouse-ear cress) protein is Putative F-box protein At1g32660.